The primary structure comprises 181 residues: Probable calcium-binding protein CML16 (181 aa).

A disordered region spans residues Met-1–Ala-24. EF-hand domains follow at residues Pro-23 to Pro-58, Ala-63 to Asp-98, Glu-100 to Gly-135, and Cys-136 to Ala-171. Ca(2+)-binding residues include Asp-36, Asp-38, Asp-40, Arg-42, Glu-47, Asp-76, Asp-78, Asp-80, Glu-87, Asp-113, Asp-115, Asp-117, Arg-119, Glu-124, Asp-149, Asp-151, Asp-153, Cys-155, and Glu-160.

Potential calcium sensor. This is Probable calcium-binding protein CML16 (CML16) from Oryza sativa subsp. japonica (Rice).